The following is a 38-amino-acid chain: Large ribosomal subunit protein bL36c (38 aa).

This sequence belongs to the bacterial ribosomal protein bL36 family.

It localises to the plastid. The protein localises to the apicoplast. This is Large ribosomal subunit protein bL36c (rpl36) from Theileria parva (East coast fever infection agent).